Consider the following 168-residue polypeptide: Putative adenylate kinase (168 aa).

The ATP site is built by Gly-10, Gly-12, Lys-13, Thr-14, and Thr-15. The interval 28–51 (HLNERIREEGLDAGRDEERDSLVA) is NMP. Residues 97–107 (DRGEPAAKAAE) form an LID region. Residue Arg-98 coordinates ATP.

This sequence belongs to the adenylate kinase family. AK6 subfamily. Interacts with uS11. Not a structural component of 40S pre-ribosomes, but transiently interacts with them by binding to uS11.

It carries out the reaction AMP + ATP = 2 ADP. The catalysed reaction is ATP + H2O = ADP + phosphate + H(+). Broad-specificity nucleoside monophosphate (NMP) kinase that catalyzes the reversible transfer of the terminal phosphate group between nucleoside triphosphates and monophosphates. Also has ATPase activity. Involved in the late maturation steps of the 30S ribosomal particles, specifically 16S rRNA maturation. While NMP activity is not required for ribosome maturation, ATPase activity is. Associates transiently with small ribosomal subunit protein uS11. ATP hydrolysis breaks the interaction with uS11. May temporarily remove uS11 from the ribosome to enable a conformational change of the ribosomal RNA that is needed for the final maturation step of the small ribosomal subunit. The sequence is that of Putative adenylate kinase from Natronomonas pharaonis (strain ATCC 35678 / DSM 2160 / CIP 103997 / JCM 8858 / NBRC 14720 / NCIMB 2260 / Gabara) (Halobacterium pharaonis).